Consider the following 240-residue polypeptide: Methylthioribulose-1-phosphate dehydratase (240 aa).

Residue cysteine 103 coordinates substrate. Residues histidine 121 and histidine 123 each coordinate Zn(2+). The Proton donor/acceptor role is filled by glutamate 144. Residue histidine 200 participates in Zn(2+) binding.

The protein belongs to the aldolase class II family. MtnB subfamily. The cofactor is Zn(2+).

The protein resides in the cytoplasm. It catalyses the reaction 5-(methylsulfanyl)-D-ribulose 1-phosphate = 5-methylsulfanyl-2,3-dioxopentyl phosphate + H2O. The protein operates within amino-acid biosynthesis; L-methionine biosynthesis via salvage pathway; L-methionine from S-methyl-5-thio-alpha-D-ribose 1-phosphate: step 2/6. Functionally, catalyzes the dehydration of methylthioribulose-1-phosphate (MTRu-1-P) into 2,3-diketo-5-methylthiopentyl-1-phosphate (DK-MTP-1-P). In Komagataella phaffii (strain GS115 / ATCC 20864) (Yeast), this protein is Methylthioribulose-1-phosphate dehydratase.